The chain runs to 223 residues: Coiled-coil domain-containing protein 70 (223 aa).

The stretch at 129–153 (NALWERDRNLLQEDKALWEEEKALW) forms a coiled coil. A disordered region spans residues 199-223 (EQRHQNGPYNANEEPQSTSFPRGRA). Over residues 203–223 (QNGPYNANEEPQSTSFPRGRA) the composition is skewed to polar residues.

In Mus musculus (Mouse), this protein is Coiled-coil domain-containing protein 70.